A 489-amino-acid chain; its full sequence is MGLFGMMKFAHTHHLVKRRGLGAPAGYFTPIAVDLWNVMYTLVVKYQRRYPSYDREAITLHCLCRLLKVFTQKSLFPIFVTDRGVNCMEPVVFGAKAILARTTAQCRTDEEASDVDASPPPSPITDSRPSSAFSNMRRRGTSLASGTRGTAGSGAALPSAAPSKPALRLAHLFCIRVLRALGYAYINSGQLEADDACANLYHTNTVAYVYTTDTDLLLMGCDIVLDISACYIPTINCRDILKYFKMSYPQFLALFVRCHTDLHPNNTYASVEDVLRECHWTPPSRSQTRRAIRREHTSSRSTETRPPLPPAAGGTETRVSWTEILTQQIAGGYEDDEDLPLDPRDVTGGHPGPRSSSSEILTPPELVQVPNAQLLEEHRSYVANPRRHVIHDAPESLDWLPDPMTITELVEHRYIKYVISLIGPKERGPWTLLKRLPIYQDIRDENLARSIVTRHITAPDIADRFLEQLRTQAPPPAFYKDVLAKFWDE.

Disordered regions lie at residues 110 to 135, 142 to 161, 285 to 319, and 332 to 364; these read EEAS…AFSN, SLAS…PSAA, RSQT…ETRV, and GYED…LTPP. Residues 124 to 134 are compositionally biased toward polar residues; that stretch reads ITDSRPSSAFS.

The protein belongs to the herpesviridae VHS protein family. In terms of assembly, interacts with human EIF4H, EIF4A1 and EIF4A2; interaction with eIF4AI and EIF4A2 presumably allows Vhs protein to associate with the eIF4F cap-binding complex.

Its subcellular location is the virion. Minor structural protein that acts as an endoribonuclease during lytic infection. Degrades host mRNAs in the cytoplasm by cutting them at preferred sites, including some in regions of translation initiation. Together with inhibition of host splicing by ICP27, contributes to an overall decrease in host protein synthesis. Also, after the onset of viral transcription, accelerates the turnover of viral mRNA, thereby facilitating the sequential expression of different classes of viral genes. Binds translation initiation factors eIF4H, eIF4AI, and eIF4AII, thereby may interact directly with the translation initiation complex and thus digest specifically mRNAs. Also impedes antigen presentation by major histocompatibility complex class I and class II molecules, inhibits secretion of cytokines that would otherwise recruit lymphocytes and neutrophils cells to the site of infection and blocks the activation of dendritic cells. Plays a role in the inhibition of interferon-beta activation by the cGAS/STING pathway. Mechanistically, down-regulates the expression of host cGAS/MB21D1. Also decreases the accumulation of other interferon-induced mRNAs such as host IFIT3 or CH25H to subvert their antiviral activity. The polypeptide is Virion host shutoff protein (UL41) (Human herpesvirus 1 (strain 17) (HHV-1)).